Reading from the N-terminus, the 117-residue chain is Large ribosomal subunit protein bL20 (117 aa).

Belongs to the bacterial ribosomal protein bL20 family.

In terms of biological role, binds directly to 23S ribosomal RNA and is necessary for the in vitro assembly process of the 50S ribosomal subunit. It is not involved in the protein synthesizing functions of that subunit. The chain is Large ribosomal subunit protein bL20 from Helicobacter hepaticus (strain ATCC 51449 / 3B1).